Here is a 237-residue protein sequence, read N- to C-terminus: 1-(5-phosphoribosyl)-5-[(5-phosphoribosylamino)methylideneamino] imidazole-4-carboxamide isomerase (237 aa).

The Proton acceptor role is filled by Asp-8. Asp-130 functions as the Proton donor in the catalytic mechanism.

The protein belongs to the HisA/HisF family.

It is found in the cytoplasm. The enzyme catalyses 1-(5-phospho-beta-D-ribosyl)-5-[(5-phospho-beta-D-ribosylamino)methylideneamino]imidazole-4-carboxamide = 5-[(5-phospho-1-deoxy-D-ribulos-1-ylimino)methylamino]-1-(5-phospho-beta-D-ribosyl)imidazole-4-carboxamide. It participates in amino-acid biosynthesis; L-histidine biosynthesis; L-histidine from 5-phospho-alpha-D-ribose 1-diphosphate: step 4/9. The sequence is that of 1-(5-phosphoribosyl)-5-[(5-phosphoribosylamino)methylideneamino] imidazole-4-carboxamide isomerase from Caldicellulosiruptor bescii (strain ATCC BAA-1888 / DSM 6725 / KCTC 15123 / Z-1320) (Anaerocellum thermophilum).